A 151-amino-acid chain; its full sequence is D-aminoacyl-tRNA deacylase (151 aa).

The short motif at 137-138 is the Gly-cisPro motif, important for rejection of L-amino acids element; it reads GP.

It belongs to the DTD family. Homodimer.

The protein resides in the cytoplasm. It catalyses the reaction glycyl-tRNA(Ala) + H2O = tRNA(Ala) + glycine + H(+). The enzyme catalyses a D-aminoacyl-tRNA + H2O = a tRNA + a D-alpha-amino acid + H(+). In terms of biological role, an aminoacyl-tRNA editing enzyme that deacylates mischarged D-aminoacyl-tRNAs. Also deacylates mischarged glycyl-tRNA(Ala), protecting cells against glycine mischarging by AlaRS. Acts via tRNA-based rather than protein-based catalysis; rejects L-amino acids rather than detecting D-amino acids in the active site. By recycling D-aminoacyl-tRNA to D-amino acids and free tRNA molecules, this enzyme counteracts the toxicity associated with the formation of D-aminoacyl-tRNA entities in vivo and helps enforce protein L-homochirality. This chain is D-aminoacyl-tRNA deacylase, found in Azoarcus sp. (strain BH72).